The sequence spans 261 residues: uncharacterized protein (261 aa).

The segment at 1–22 (MGVADNEYISVPTGEPVQQQPQ) is disordered. The next 3 helical transmembrane spans lie at 92 to 112 (IIIL…ILGL), 122 to 142 (IVVM…IFLF), and 147 to 167 (INTI…LMNY).

Its subcellular location is the membrane. This is an uncharacterized protein from Dictyostelium discoideum (Social amoeba).